The sequence spans 567 residues: Urease subunit alpha (567 aa).

Residues 128 to 567 (GGVDTHVHYI…LPLAQRYHLF (440 aa)) form the Urease domain. The Ni(2+) site is built by His133, His135, and Lys216. An N6-carboxylysine modification is found at Lys216. His218 contacts substrate. Ni(2+)-binding residues include His245 and His271. Catalysis depends on His319, which acts as the Proton donor. Asp359 provides a ligand contact to Ni(2+).

It belongs to the metallo-dependent hydrolases superfamily. Urease alpha subunit family. Heterotrimer of UreA (gamma), UreB (beta) and UreC (alpha) subunits. Three heterotrimers associate to form the active enzyme. It depends on Ni cation as a cofactor. Post-translationally, carboxylation allows a single lysine to coordinate two nickel ions.

Its subcellular location is the cytoplasm. It catalyses the reaction urea + 2 H2O + H(+) = hydrogencarbonate + 2 NH4(+). The protein operates within nitrogen metabolism; urea degradation; CO(2) and NH(3) from urea (urease route): step 1/1. The sequence is that of Urease subunit alpha from Pseudoalteromonas translucida (strain TAC 125).